The following is a 65-amino-acid chain: MKALVEFRKKNKKDLYTELLQLLREQFNLRMQSVSGKLKQPHLLRKVRRNIAQVKTLLDSKEEIK.

The protein belongs to the universal ribosomal protein uL29 family.

The sequence is that of Large ribosomal subunit protein uL29 (rpmC) from Buchnera aphidicola subsp. Acyrthosiphon pisum (strain APS) (Acyrthosiphon pisum symbiotic bacterium).